Reading from the N-terminus, the 361-residue chain is Queuine tRNA-ribosyltransferase (361 aa).

Asp92 acts as the Proton acceptor in catalysis. Substrate contacts are provided by residues 92-96 (DSGGF), Asp146, Gln189, and Gly216. An RNA binding region spans residues 247-253 (GVGKPAD). The active-site Nucleophile is Asp266. The RNA binding; important for wobble base 34 recognition stretch occupies residues 271-275 (TRSGR). The Zn(2+) site is built by Cys304, Cys306, Cys309, and His335.

The protein belongs to the queuine tRNA-ribosyltransferase family. In terms of assembly, homodimer. Within each dimer, one monomer is responsible for RNA recognition and catalysis, while the other monomer binds to the replacement base PreQ1. It depends on Zn(2+) as a cofactor.

The enzyme catalyses 7-aminomethyl-7-carbaguanine + guanosine(34) in tRNA = 7-aminomethyl-7-carbaguanosine(34) in tRNA + guanine. It participates in tRNA modification; tRNA-queuosine biosynthesis. Its function is as follows. Catalyzes the base-exchange of a guanine (G) residue with the queuine precursor 7-aminomethyl-7-deazaguanine (PreQ1) at position 34 (anticodon wobble position) in tRNAs with GU(N) anticodons (tRNA-Asp, -Asn, -His and -Tyr). Catalysis occurs through a double-displacement mechanism. The nucleophile active site attacks the C1' of nucleotide 34 to detach the guanine base from the RNA, forming a covalent enzyme-RNA intermediate. The proton acceptor active site deprotonates the incoming PreQ1, allowing a nucleophilic attack on the C1' of the ribose to form the product. After dissociation, two additional enzymatic reactions on the tRNA convert PreQ1 to queuine (Q), resulting in the hypermodified nucleoside queuosine (7-(((4,5-cis-dihydroxy-2-cyclopenten-1-yl)amino)methyl)-7-deazaguanosine). This is Queuine tRNA-ribosyltransferase from Rickettsia canadensis (strain McKiel).